The chain runs to 37 residues: Esculentin-2A (37 aa).

A disulfide bridge connects residues cysteine 31 and cysteine 37.

It belongs to the frog skin active peptide (FSAP) family. Esculentin subfamily. Expressed by the skin glands.

The protein resides in the secreted. Its function is as follows. Shows antibacterial activity against representative Gram-negative and Gram-positive bacterial species, and hemolytic activity. The protein is Esculentin-2A of Pelophylax lessonae (Pool frog).